A 106-amino-acid polypeptide reads, in one-letter code: MICOS complex subunit MIC12 (106 aa).

A helical membrane pass occupies residues 11-27; it reads VKWTLSVGVIGSVFYLY.

It belongs to the MICOS complex subunit Mic12 family. As to quaternary structure, component of the mitochondrial contact site and cristae organizing system (MICOS) complex.

Its subcellular location is the mitochondrion inner membrane. Component of the MICOS complex, a large protein complex of the mitochondrial inner membrane that plays crucial roles in the maintenance of crista junctions, inner membrane architecture, and formation of contact sites to the outer membrane. The sequence is that of MICOS complex subunit MIC12 (AIM5) from Saccharomyces cerevisiae (strain RM11-1a) (Baker's yeast).